The sequence spans 573 residues: Eukaryotic translation initiation factor 3 subunit D (573 aa).

The segment at 111–162 is disordered; that stretch reads VFTRGGRGQRGARGTERGGRAQLSRGRGGQYGGGYDRGGRSAAGGRGGRRFG. Positions 136–156 are enriched in gly residues; that stretch reads GRGGQYGGGYDRGGRSAAGGR. An RNA gate region spans residues 301–315; it reads ALDMVTVNENAVDAP. Residues 552 to 573 are disordered; the sequence is PAGGLDEEEDNGDLGQEEDDEE. A compositionally biased stretch (acidic residues) spans 556–573; sequence LDEEEDNGDLGQEEDDEE.

It belongs to the eIF-3 subunit D family. Component of the eukaryotic translation initiation factor 3 (eIF-3) complex.

It is found in the cytoplasm. In terms of biological role, mRNA cap-binding component of the eukaryotic translation initiation factor 3 (eIF-3) complex, which is involved in protein synthesis of a specialized repertoire of mRNAs and, together with other initiation factors, stimulates binding of mRNA and methionyl-tRNAi to the 40S ribosome. The eIF-3 complex specifically targets and initiates translation of a subset of mRNAs involved in cell proliferation. In the eIF-3 complex, eif3d specifically recognizes and binds the 7-methylguanosine cap of a subset of mRNAs. The protein is Eukaryotic translation initiation factor 3 subunit D of Pyricularia oryzae (strain 70-15 / ATCC MYA-4617 / FGSC 8958) (Rice blast fungus).